The chain runs to 561 residues: Oxygen-dependent choline dehydrogenase (561 aa).

7 to 36 serves as a coordination point for FAD; sequence DYIIVGAGSAGNVLASRLAEDADVTVLLLE. The Proton acceptor role is filled by His-474.

It belongs to the GMC oxidoreductase family. FAD is required as a cofactor.

It catalyses the reaction choline + A = betaine aldehyde + AH2. It carries out the reaction betaine aldehyde + NAD(+) + H2O = glycine betaine + NADH + 2 H(+). Its pathway is amine and polyamine biosynthesis; betaine biosynthesis via choline pathway; betaine aldehyde from choline (cytochrome c reductase route): step 1/1. Functionally, involved in the biosynthesis of the osmoprotectant glycine betaine. Catalyzes the oxidation of choline to betaine aldehyde and betaine aldehyde to glycine betaine at the same rate. This chain is Oxygen-dependent choline dehydrogenase, found in Paraburkholderia xenovorans (strain LB400).